The primary structure comprises 91 residues: Large ribosomal subunit protein bL31B (91 aa).

Belongs to the bacterial ribosomal protein bL31 family. Type B subfamily. In terms of assembly, part of the 50S ribosomal subunit.

The polypeptide is Large ribosomal subunit protein bL31B (Neisseria gonorrhoeae (strain NCCP11945)).